Consider the following 976-residue polypeptide: Collagen alpha-1(I) chain (976 aa).

Phosphoserine is present on Ser-1. The interval 1 to 976 is disordered; the sequence is SAGGISVPGP…PGPPGPPGPP (976 aa). Residues Pro-20, Pro-23, Pro-26, Pro-35, Pro-38, Pro-41, Pro-55, Pro-70, Pro-76, Pro-85, and Pro-91 each carry the 4-hydroxyproline modification. The span at 58-72 shows a compositional bias: basic and acidic residues; it reads NGDDGEAGKPGRPGE. 5-hydroxylysine; alternate is present on Lys-94. Lys-94 carries an O-linked (Gal...) hydroxylysine; alternate glycan. Ser-100 is modified (phosphoserine). 2 stretches are compositionally biased toward low complexity: residues 108–118 and 132–150; these read DAGPAGPKGAP and PGAS…TGAA. 4-hydroxyproline is present on residues Pro-118, Pro-132, Pro-153, Pro-162, Pro-165, Pro-192, Pro-195, Pro-207, Pro-213, Pro-222, Pro-228, Pro-231, and Pro-246. Residues 152–164 are compositionally biased toward pro residues; the sequence is PPGPTGPAGPPGF. The span at 198–237 shows a compositional bias: low complexity; sequence AGAAGPAGNPGADGQPGAKGANGAPGIAGAPGFPGARGPS. Lys-249 is subject to 5-hydroxylysine. Pro-255, Pro-258, Pro-266, Pro-275, Pro-290, Pro-296, Pro-304, and Pro-310 each carry 4-hydroxyproline. A compositionally biased stretch (gly residues) spans 294-308; sequence GLPGPGERGGPGSRG. Lys-319 bears the 5-hydroxylysine mark. 25 positions are modified to 4-hydroxyproline: Pro-328, Pro-337, Pro-343, Pro-349, Pro-358, Pro-361, Pro-370, Pro-379, Pro-385, Pro-397, Pro-406, Pro-415, Pro-418, Pro-436, Pro-453, Pro-459, Pro-465, Pro-471, Pro-477, Pro-483, Pro-495, Pro-504, Pro-517, Pro-523, and Pro-532. The span at 352 to 378 shows a compositional bias: low complexity; the sequence is KGLTGSPGSPGPDGKTGPPGPAGQDGR. A compositionally biased stretch (low complexity) spans 387 to 406; the sequence is ARGQAGVMGFPGPKGAAGEP. Residues 465 to 474 are compositionally biased toward low complexity; the sequence is PGEAGKPGEQ. 5-hydroxylysine is present on Lys-544. Pro-550, Pro-565, and Pro-571 each carry 4-hydroxyproline. Positions 577 to 591 are enriched in low complexity; that stretch reads SGPSGPAGPTGARGA. Ser-580 carries the phosphoserine modification. 4-hydroxyproline is present on residues Pro-592, Pro-598, Pro-601, Pro-610, Pro-616, Pro-634, Pro-643, and Pro-652. Positions 604 to 631 are enriched in low complexity; that stretch reads AGFAGPPGADGQPGAKGEPGDAGAKGDA. A 5-hydroxylysine modification is found at Lys-655. Residues 660–676 show a composition bias toward low complexity; that stretch reads SAGPPGATGFPGAAGRV. 4-hydroxyproline is present on residues Pro-664 and Pro-670. Pro-678 bears the 3-hydroxyproline mark. 4-hydroxyproline is present on residues Pro-679, Pro-688, Pro-691, Pro-718, Pro-726, Pro-735, Pro-753, Pro-762, Pro-765, Pro-771, Pro-786, Pro-792, Pro-798, Pro-806, and Pro-812. Over residues 723–735 the composition is skewed to low complexity; the sequence is KGSPGADGPAGAP. Positions 785–795 are enriched in pro residues; that stretch reads PPGPMGPPGLA. At Lys-821 the chain carries 5-hydroxylysine. The span at 829–844 shows a compositional bias: pro residues; it reads PGPPGAPGAPGAPGPV. 4-hydroxyproline is present on residues Pro-832, Pro-835, and Pro-838. Residues 864–878 show a composition bias toward low complexity; sequence AGPAGARGPAGPQGP. Over residues 879–893 the composition is skewed to basic and acidic residues; that stretch reads RGDKGETGEQGDRGI. Lys-882 is modified (5-hydroxylysine). A 5-hydroxylysine; alternate modification is found at Lys-894. The O-linked (Gal...) hydroxylysine; alternate glycan is linked to Lys-894. 4 positions are modified to 4-hydroxyproline: Pro-907, Pro-910, Pro-928, and Pro-943. The segment covering 910–943 has biased composition (low complexity); sequence PGEQGPSGASGPAGPRGPPGSAGSPGKDGLNGLP. 3-hydroxyproline is present on Pro-948. Position 949 is a 4-hydroxyproline (Pro-949). The segment covering 961–976 has biased composition (pro residues); that stretch reads VGPPGPPGPPGPPGPP. The residue at position 963 (Pro-963) is a 3-hydroxyproline. Pro-964 bears the 4-hydroxyproline mark. At Pro-966 the chain carries 3-hydroxyproline. At Pro-967 the chain carries 4-hydroxyproline. 3-hydroxyproline is present on Pro-969. 4-hydroxyproline occurs at positions 970, 973, and 976.

The protein belongs to the fibrillar collagen family. In terms of assembly, trimers of one alpha 2(I) and two alpha 1(I) chains. Contains mostly 4-hydroxyproline. Proline residues at the third position of the tripeptide repeating unit (G-X-Y) are hydroxylated in some or all of the chains. In terms of processing, contains 3-hydroxyproline at a few sites. This modification occurs on the first proline residue in the sequence motif Gly-Pro-Hyp, where Hyp is 4-hydroxyproline. Post-translationally, lysine residues at the third position of the tripeptide repeating unit (G-X-Y) are 5-hydroxylated in some or all of the chains. O-glycosylated on hydroxylated lysine residues. The O-linked glycan consists of a Glc-Gal disaccharide. Expressed in bones.

It localises to the secreted. The protein localises to the extracellular space. Its subcellular location is the extracellular matrix. Type I collagen is a member of group I collagen (fibrillar forming collagen). This chain is Collagen alpha-1(I) chain, found in Acratocnus ye (Hispaniolan ground sloth).